We begin with the raw amino-acid sequence, 195 residues long: Nucleoside triphosphate pyrophosphatase (195 aa).

Asp-70 acts as the Proton acceptor in catalysis.

Belongs to the Maf family. A divalent metal cation serves as cofactor.

Its subcellular location is the cytoplasm. It catalyses the reaction a ribonucleoside 5'-triphosphate + H2O = a ribonucleoside 5'-phosphate + diphosphate + H(+). The enzyme catalyses a 2'-deoxyribonucleoside 5'-triphosphate + H2O = a 2'-deoxyribonucleoside 5'-phosphate + diphosphate + H(+). Functionally, nucleoside triphosphate pyrophosphatase. May have a dual role in cell division arrest and in preventing the incorporation of modified nucleotides into cellular nucleic acids. In Microcystis aeruginosa (strain NIES-843 / IAM M-2473), this protein is Nucleoside triphosphate pyrophosphatase.